The sequence spans 297 residues: Protoheme IX farnesyltransferase (297 aa).

Helical transmembrane passes span 26 to 46, 48 to 68, 96 to 116, 120 to 140, 147 to 167, 174 to 194, 218 to 238, 245 to 265, and 276 to 296; these read VTQL…PGMV, YPVL…AFAV, LHII…LWNF, LTMW…TWLL, NIVI…AAVT, AWHL…ALAL, LLNI…PYIY, YLIS…ALFI, and FRFS…DHYF.

Belongs to the UbiA prenyltransferase family. Protoheme IX farnesyltransferase subfamily.

Its subcellular location is the cell inner membrane. The enzyme catalyses heme b + (2E,6E)-farnesyl diphosphate + H2O = Fe(II)-heme o + diphosphate. It participates in porphyrin-containing compound metabolism; heme O biosynthesis; heme O from protoheme: step 1/1. In terms of biological role, converts heme B (protoheme IX) to heme O by substitution of the vinyl group on carbon 2 of heme B porphyrin ring with a hydroxyethyl farnesyl side group. The sequence is that of Protoheme IX farnesyltransferase from Polynucleobacter necessarius subsp. necessarius (strain STIR1).